The chain runs to 515 residues: Sodium/hydrogen exchanger 9B1 (515 aa).

Residues 1-10 are compositionally biased toward basic and acidic residues; sequence MHTTESKNEH. Positions 1–32 are disordered; sequence MHTTESKNEHLEDENFQTSTTPQSLIDPNNTA. Polar residues predominate over residues 16 to 32; the sequence is FQTSTTPQSLIDPNNTA. 13 helical membrane passes run 66–86, 95–115, 116–136, 152–172, 187–207, 215–235, 260–280, 284–304, 337–357, 368–388, 407–427, 431–451, and 472–492; these read VIITNGVILFVIWCMTWSILG, LFGLFIIFYSAIIGGKILQLI, RIPLVPPLPPLLGMLLAGFTI, WSSILRSIALTIILIRAGLGL, LAVGPCLMEASAAAVFSHFIM, FLLGFVLGAVSPAVVVPYMMV, ILAITGFNTCLSIVFSSGGIL, IASIRNVCISLLAGIVLGFFV, IGLHGSGGLCTLVLSFIAGTK, IITTVWDIFQPLLFGLVGAEV, LALCVRILTTYLLMCFAGFSF, IFIALAWMPKATVQAVLGPLA, and VAFLAILITAPNGALLMGILG.

The protein belongs to the monovalent cation:proton antiporter 1 (CPA1) transporter (TC 2.A.36) family. As to expression, expressed only in the testis.

It localises to the cell projection. It is found in the cilium. The protein resides in the flagellum membrane. Sperm-specific Na(+)/H(+) exchanger involved in intracellular pH regulation of spermatozoa. Involved in sperm motility and fertility. The sequence is that of Sodium/hydrogen exchanger 9B1 from Homo sapiens (Human).